A 72-amino-acid chain; its full sequence is UPF0270 protein YheU (72 aa).

This sequence belongs to the UPF0270 family.

The chain is UPF0270 protein YheU from Escherichia coli (strain ATCC 8739 / DSM 1576 / NBRC 3972 / NCIMB 8545 / WDCM 00012 / Crooks).